The sequence spans 126 residues: Small ribosomal subunit protein uS13 (126 aa).

Residues 92–126 (HRRGLPVRGQRTKTNARTRKGPRKTVAGKKKATRK) are disordered.

It belongs to the universal ribosomal protein uS13 family. Part of the 30S ribosomal subunit. Forms a loose heterodimer with protein S19. Forms two bridges to the 50S subunit in the 70S ribosome.

In terms of biological role, located at the top of the head of the 30S subunit, it contacts several helices of the 16S rRNA. In the 70S ribosome it contacts the 23S rRNA (bridge B1a) and protein L5 of the 50S subunit (bridge B1b), connecting the 2 subunits; these bridges are implicated in subunit movement. Contacts the tRNAs in the A and P-sites. This is Small ribosomal subunit protein uS13 from Deinococcus geothermalis (strain DSM 11300 / CIP 105573 / AG-3a).